The primary structure comprises 203 residues: Large ribosomal subunit protein bL25 (203 aa).

The protein belongs to the bacterial ribosomal protein bL25 family. CTC subfamily. As to quaternary structure, part of the 50S ribosomal subunit; part of the 5S rRNA/L5/L18/L25 subcomplex. Contacts the 5S rRNA. Binds to the 5S rRNA independently of L5 and L18.

In terms of biological role, this is one of the proteins that binds to the 5S RNA in the ribosome where it forms part of the central protuberance. This chain is Large ribosomal subunit protein bL25, found in Cellvibrio japonicus (strain Ueda107) (Pseudomonas fluorescens subsp. cellulosa).